The primary structure comprises 615 residues: Protein PSK SIMULATOR 2 (615 aa).

Glycine 2 is lipidated: N-myristoyl glycine. Residues 16 to 27 (KKLRSNDDDKSR) show a composition bias toward basic and acidic residues. 2 disordered regions span residues 16–59 (KKLR…KSSK) and 506–529 (AHGV…SNTQ). The segment covering 42 to 52 (SDSYYSDNYGG) has biased composition (low complexity). Positions 512–529 (QETNHVSPPNNRTISNTQ) are enriched in polar residues.

It localises to the nucleus. In terms of biological role, promotes seedling growth probably via the regulation of phytosulfokine (PSK) signaling; PSK are peptide phytohormones acting as growth factors. Involved in PSK-induced root growth. Together with PSI1 and PSI3, required during vegetative growth and reproduction. The sequence is that of Protein PSK SIMULATOR 2 from Arabidopsis thaliana (Mouse-ear cress).